Reading from the N-terminus, the 558-residue chain is Alpha-1,3-mannosyltransferase MNT2 (558 aa).

Over 1 to 6 (MRRKNR) the chain is Cytoplasmic. Residues 7 to 27 (LFILVVLLGIVLVVYYSQLNS) traverse the membrane as a helical; Signal-anchor for type II membrane protein segment. Residues 28 to 558 (LDLVEPVQSS…QIVDIWNKDI (531 aa)) are Lumenal-facing. A glycan (N-linked (GlcNAc...) asparagine) is linked at Asn187.

It belongs to the MNN1/MNT family.

The protein resides in the golgi apparatus membrane. It participates in protein modification; protein glycosylation. Mannosyltransferase involved in adding the 4th and 5th mannose residues of O-linked glycans. In Saccharomyces cerevisiae (strain ATCC 204508 / S288c) (Baker's yeast), this protein is Alpha-1,3-mannosyltransferase MNT2 (MNT2).